The chain runs to 504 residues: Pyruvate kinase (504 aa).

R53 is a substrate binding site. Positions 55, 57, 88, and 89 each coordinate K(+). N55–H58 contributes to the ATP binding site. ATP-binding residues include R95 and K181. E246 serves as a coordination point for Mg(2+). Substrate-binding residues include G269, D270, and T302. D270 serves as a coordination point for Mg(2+).

It belongs to the pyruvate kinase family. In terms of assembly, homotetramer. It depends on Mg(2+) as a cofactor. K(+) is required as a cofactor.

It is found in the cytoplasm. The enzyme catalyses pyruvate + ATP = phosphoenolpyruvate + ADP + H(+). Its pathway is carbohydrate degradation; glycolysis; pyruvate from D-glyceraldehyde 3-phosphate: step 5/5. The sequence is that of Pyruvate kinase (CDC19) from Candida albicans (strain SC5314 / ATCC MYA-2876) (Yeast).